The following is a 137-amino-acid chain: uncharacterized protein (137 aa).

Helical transmembrane passes span 20 to 39, 44 to 61, 86 to 105, and 109 to 131; these read YGKI…GYAV, WFIT…LSLV, VEIF…ALDL, and AALA…YGYY.

It localises to the cell membrane. This is an uncharacterized protein from Archaeoglobus fulgidus (strain ATCC 49558 / DSM 4304 / JCM 9628 / NBRC 100126 / VC-16).